Consider the following 283-residue polypeptide: Elongation factor Ts (283 aa).

Residues 80-83 form an involved in Mg(2+) ion dislocation from EF-Tu region; that stretch reads TDFV.

It belongs to the EF-Ts family.

The protein localises to the cytoplasm. In terms of biological role, associates with the EF-Tu.GDP complex and induces the exchange of GDP to GTP. It remains bound to the aminoacyl-tRNA.EF-Tu.GTP complex up to the GTP hydrolysis stage on the ribosome. The polypeptide is Elongation factor Ts (Salmonella agona (strain SL483)).